Consider the following 197-residue polypeptide: Orotate phosphoribosyltransferase (197 aa).

5-phospho-alpha-D-ribose 1-diphosphate is bound by residues R87, K91, H93, and 112–120 (DDVATTGGS). Residues T116 and R144 each contribute to the orotate site.

Belongs to the purine/pyrimidine phosphoribosyltransferase family. PyrE subfamily. In terms of assembly, homodimer. Mg(2+) serves as cofactor.

The catalysed reaction is orotidine 5'-phosphate + diphosphate = orotate + 5-phospho-alpha-D-ribose 1-diphosphate. It participates in pyrimidine metabolism; UMP biosynthesis via de novo pathway; UMP from orotate: step 1/2. Its function is as follows. Catalyzes the transfer of a ribosyl phosphate group from 5-phosphoribose 1-diphosphate to orotate, leading to the formation of orotidine monophosphate (OMP). This is Orotate phosphoribosyltransferase from Sulfolobus acidocaldarius (strain ATCC 33909 / DSM 639 / JCM 8929 / NBRC 15157 / NCIMB 11770).